Reading from the N-terminus, the 884-residue chain is Translation initiation factor IF-2 (884 aa).

Disordered stretches follow at residues 42-62 (DVQK…QEEV) and 123-254 (EPKG…GGKK). Residues 194–212 (PAERREVVIPPKRKMEERA) show a composition bias toward basic and acidic residues. The segment covering 234–248 (EPETPAGGAPGAKKG) has biased composition (low complexity). Residues 384 to 553 (KRPPVVTIMG…LLQADVMDLK (170 aa)) enclose the tr-type G domain. The segment at 393-400 (GHVDHGKT) is G1. 393-400 (GHVDHGKT) contributes to the GTP binding site. Residues 418–422 (GITQH) form a G2 region. Residues 439 to 442 (DTPG) form a G3 region. GTP contacts are provided by residues 439–443 (DTPGH) and 493–496 (NKID). The G4 stretch occupies residues 493-496 (NKID). Residues 529-531 (SAK) are G5.

This sequence belongs to the TRAFAC class translation factor GTPase superfamily. Classic translation factor GTPase family. IF-2 subfamily.

It localises to the cytoplasm. In terms of biological role, one of the essential components for the initiation of protein synthesis. Protects formylmethionyl-tRNA from spontaneous hydrolysis and promotes its binding to the 30S ribosomal subunits. Also involved in the hydrolysis of GTP during the formation of the 70S ribosomal complex. The sequence is that of Translation initiation factor IF-2 from Geobacter metallireducens (strain ATCC 53774 / DSM 7210 / GS-15).